Consider the following 930-residue polypeptide: Isoleucine--tRNA ligase (930 aa).

The 'HIGH' region motif lies at 57–67 (PYANGNIHVGH). L-isoleucyl-5'-AMP is bound at residue glutamate 554. The 'KMSKS' region signature appears at 595–599 (KMSKS). Residue lysine 598 participates in ATP binding. 4 residues coordinate Zn(2+): cysteine 888, cysteine 891, cysteine 908, and cysteine 911.

Belongs to the class-I aminoacyl-tRNA synthetase family. IleS type 1 subfamily. Monomer. Requires Zn(2+) as cofactor.

It localises to the cytoplasm. It catalyses the reaction tRNA(Ile) + L-isoleucine + ATP = L-isoleucyl-tRNA(Ile) + AMP + diphosphate. Catalyzes the attachment of isoleucine to tRNA(Ile). As IleRS can inadvertently accommodate and process structurally similar amino acids such as valine, to avoid such errors it has two additional distinct tRNA(Ile)-dependent editing activities. One activity is designated as 'pretransfer' editing and involves the hydrolysis of activated Val-AMP. The other activity is designated 'posttransfer' editing and involves deacylation of mischarged Val-tRNA(Ile). This chain is Isoleucine--tRNA ligase, found in Streptococcus mutans serotype c (strain ATCC 700610 / UA159).